The following is a 171-amino-acid chain: MKIWKDIFTGDEMFSDTYKVKLIDNVMYEVYGKHVSRTLGDVQLDGANPSAEEADEGTDAATESGVDIVLNHRLVETGFADKKQFTTYLKDYMKKLVTRLEENNPSEVEVFKTNINKVMKDLLGRFKDLQFFTGESMDCEGLIAMLEYRDIDGESTPILLCFKHGLEEEKF.

Residues 1–171 (MKIWKDIFTG…FKHGLEEEKF (171 aa)) enclose the TCTP domain.

This sequence belongs to the TCTP family.

The protein localises to the cytoplasm. Involved in calcium binding and microtubule stabilization. In Aedes albopictus (Asian tiger mosquito), this protein is Translationally-controlled tumor protein homolog (Tctp).